The chain runs to 155 residues: SsrA-binding protein (155 aa).

It belongs to the SmpB family.

Its subcellular location is the cytoplasm. Its function is as follows. Required for rescue of stalled ribosomes mediated by trans-translation. Binds to transfer-messenger RNA (tmRNA), required for stable association of tmRNA with ribosomes. tmRNA and SmpB together mimic tRNA shape, replacing the anticodon stem-loop with SmpB. tmRNA is encoded by the ssrA gene; the 2 termini fold to resemble tRNA(Ala) and it encodes a 'tag peptide', a short internal open reading frame. During trans-translation Ala-aminoacylated tmRNA acts like a tRNA, entering the A-site of stalled ribosomes, displacing the stalled mRNA. The ribosome then switches to translate the ORF on the tmRNA; the nascent peptide is terminated with the 'tag peptide' encoded by the tmRNA and targeted for degradation. The ribosome is freed to recommence translation, which seems to be the essential function of trans-translation. This is SsrA-binding protein from Ligilactobacillus salivarius (strain UCC118) (Lactobacillus salivarius).